The following is a 404-amino-acid chain: p-hydroxybenzoate hydroxylase (404 aa).

FAD contacts are provided by residues Glu35, 45–50 (RIRAGI), and Gln105. Residues Tyr203, 214 to 216 (SMR), and Tyr224 contribute to the substrate site. Asp288 is a binding site for FAD. Pro295 provides a ligand contact to substrate. An FAD-binding site is contributed by 301–302 (LN).

The protein belongs to the aromatic-ring hydroxylase family. As to quaternary structure, homodimer. Requires FAD as cofactor.

It catalyses the reaction 4-hydroxybenzoate + NADPH + O2 + H(+) = 3,4-dihydroxybenzoate + NADP(+) + H2O. The protein operates within aromatic compound metabolism; benzoate degradation via hydroxylation; 3,4-dihydroxybenzoate from benzoate: step 2/2. Catalyzes the incorporation of an atom of dioxygen into p-hydroxybenzoate (p-OHB) to form 3,4-dihydroxybenzoate (3,4DOHB). The reaction occurs in two parts: reduction of the flavin adenine dinucleotide (FAD) in the enzyme by reduced nicotinamide adenine dinucleotide phosphate (NADPH) in response to binding p-hydroxybenzoate to the enzyme and oxidation of reduced FAD with oxygen to form a hydroperoxide, which then oxygenates p-hydroxybenzoate. In Acinetobacter baylyi (strain ATCC 33305 / BD413 / ADP1), this protein is p-hydroxybenzoate hydroxylase (pobA).